The sequence spans 144 residues: MAREFSRTNRVGQQIQREIALILQREVKDPRIGMVTVSDVEVSKDLNYAKVYVTFLQLDIDAERIAEGLKGLTEAAGYIRSLLGSAMRLRVVPELRFYYDQTLVEGMRISNLVSNTVRDDKRRMAEAGREEDEAAPDDTTEDKA.

Residues 120-144 (DKRRMAEAGREEDEAAPDDTTEDKA) are disordered. Positions 129–144 (REEDEAAPDDTTEDKA) are enriched in acidic residues.

The protein belongs to the RbfA family. Monomer. Binds 30S ribosomal subunits, but not 50S ribosomal subunits or 70S ribosomes.

The protein localises to the cytoplasm. One of several proteins that assist in the late maturation steps of the functional core of the 30S ribosomal subunit. Associates with free 30S ribosomal subunits (but not with 30S subunits that are part of 70S ribosomes or polysomes). Required for efficient processing of 16S rRNA. May interact with the 5'-terminal helix region of 16S rRNA. In Aeromonas salmonicida (strain A449), this protein is Ribosome-binding factor A.